The chain runs to 631 residues: 1,4-alpha-glucan branching enzyme GlgB (631 aa).

Residue Asp-309 is the Nucleophile of the active site. The active-site Proton donor is the Glu-362.

The protein belongs to the glycosyl hydrolase 13 family. GlgB subfamily. As to quaternary structure, monomer.

The enzyme catalyses Transfers a segment of a (1-&gt;4)-alpha-D-glucan chain to a primary hydroxy group in a similar glucan chain.. It participates in glycan biosynthesis; glycogen biosynthesis. In terms of biological role, catalyzes the formation of the alpha-1,6-glucosidic linkages in glycogen by scission of a 1,4-alpha-linked oligosaccharide from growing alpha-1,4-glucan chains and the subsequent attachment of the oligosaccharide to the alpha-1,6 position. The chain is 1,4-alpha-glucan branching enzyme GlgB from Marinobacter nauticus (strain ATCC 700491 / DSM 11845 / VT8) (Marinobacter aquaeolei).